The sequence spans 447 residues: Trimethylamine monooxygenase (447 aa).

Residues S13, E38, Q40, L46, W47, and H63 each contribute to the FAD site. Residues W71 and N73 each coordinate NADP(+). FAD is bound by residues N73 and V126. NADP(+)-binding residues include Y173, A205, S206, S208, and R229. FAD-binding residues include Q318 and T321. Residue R413 participates in NADP(+) binding.

This sequence belongs to the FMO family. Requires FAD as cofactor.

The enzyme catalyses trimethylamine + NADPH + O2 = trimethylamine N-oxide + NADP(+) + H2O. Functionally, catalyzes the oxidation of trimethylamine (TMA) to produce trimethylamine N-oxide (TMAO). TMA is the best substrate, but the enzyme can also oxidize methimazole, indole and dimethylamine (DMA). The chain is Trimethylamine monooxygenase from Roseovarius nubinhibens (strain ATCC BAA-591 / DSM 15170 / ISM).